We begin with the raw amino-acid sequence, 99 residues long: Nucleoid-associated protein SAG1747 (99 aa).

Over residues 1–10 (MMNMQNMMRQ) the composition is skewed to low complexity. Positions 1 to 20 (MMNMQNMMRQAQKLQKQMEQ) are disordered.

Belongs to the YbaB/EbfC family. In terms of assembly, homodimer.

The protein localises to the cytoplasm. It localises to the nucleoid. Its function is as follows. Binds to DNA and alters its conformation. May be involved in regulation of gene expression, nucleoid organization and DNA protection. In Streptococcus agalactiae serotype V (strain ATCC BAA-611 / 2603 V/R), this protein is Nucleoid-associated protein SAG1747.